The primary structure comprises 519 residues: 2-isopropylmalate synthase (519 aa).

The Pyruvate carboxyltransferase domain maps to Val-12 to Thr-274. Positions 21, 209, 211, and 245 each coordinate Mn(2+). Positions Arg-398–Ser-519 are regulatory domain.

It belongs to the alpha-IPM synthase/homocitrate synthase family. LeuA type 1 subfamily. In terms of assembly, homodimer. The cofactor is Mn(2+).

It is found in the cytoplasm. It catalyses the reaction 3-methyl-2-oxobutanoate + acetyl-CoA + H2O = (2S)-2-isopropylmalate + CoA + H(+). It participates in amino-acid biosynthesis; L-leucine biosynthesis; L-leucine from 3-methyl-2-oxobutanoate: step 1/4. In terms of biological role, catalyzes the condensation of the acetyl group of acetyl-CoA with 3-methyl-2-oxobutanoate (2-ketoisovalerate) to form 3-carboxy-3-hydroxy-4-methylpentanoate (2-isopropylmalate). The polypeptide is 2-isopropylmalate synthase (Afipia carboxidovorans (strain ATCC 49405 / DSM 1227 / KCTC 32145 / OM5) (Oligotropha carboxidovorans)).